The sequence spans 642 residues: Bifunctional protein glk (642 aa).

Positions 1-340 are glucokinase; the sequence is MSTGAQSKAV…QLSNRSGGAS (340 aa). Position 23–28 (23–28) interacts with ATP; the sequence is ADVGGT. An HTH rpiR-type domain is found at 341–417; the sequence is SAVFERIRQM…LKLATGLTGT (77 aa). The interval 341–642 is putative HTH-type transcriptional regulator; it reads SAVFERIRQM…SPAAKDVARD (302 aa). Positions 377–396 form a DNA-binding region, H-T-H motif; that stretch reads IVDIARKADVSQPTVIRFCR. One can recognise an SIS domain in the interval 461–600; it reads AIEILNGARR…AVGVAIRRAS (140 aa). The chain crosses the membrane as a helical span at residues 576–596; the sequence is SMISRILHLLMIDILAVGVAI.

In the N-terminal section; belongs to the bacterial glucokinase family.

Its subcellular location is the membrane. The enzyme catalyses D-glucose + ATP = D-glucose 6-phosphate + ADP + H(+). The sequence is that of Bifunctional protein glk (glk) from Burkholderia orbicola (strain AU 1054).